The primary structure comprises 828 residues: Transcription factor SOX-6 (828 aa).

The disordered stretch occupies residues 1–51 (MSSKQATSPFACAADGEDAMTQDLTSREKEEGSDQHVASHLPLHPIMHNKP). The segment covering 25 to 34 (TSREKEEGSD) has biased composition (basic and acidic residues). The residue at position 119 (Thr119) is a Phosphothreonine. Residues 184–262 (LAEKERQLST…LLQQQIQVQG (79 aa)) adopt a coiled-coil conformation. The disordered stretch occupies residues 380-470 (SPGAKMPSTP…KSSIPSPIGG (91 aa)). Residues 393–402 (NTAGTVSPTG) show a composition bias toward polar residues. A Phosphoserine modification is found at Ser399. Thr401 carries the post-translational modification Phosphothreonine. Residues Lys404 and Lys417 each participate in a glycyl lysine isopeptide (Lys-Gly) (interchain with G-Cter in SUMO) cross-link. Phosphoserine occurs at positions 439 and 442. Polar residues predominate over residues 439-461 (SPTSPTQNLFPASKTSPVNLPNK). The segment at residues 621-689 (IKRPMNAFMV…IHLEKYPNYK (69 aa)) is a DNA-binding region (HMG box). The span at 753–781 (TPSPQMTSDCSSTSASPEPSLPVIQSTYG) shows a compositional bias: polar residues. The segment at 753–828 (TPSPQMTSDC…NEAPEAVSAN (76 aa)) is disordered. Positions 796 to 809 (NGEDEMEMYDDYED) are enriched in acidic residues.

Homodimer. Interacts with DAZAP2. May interact with CENPK. In terms of processing, sumoylation inhibits the transcriptional activity. In terms of tissue distribution, expressed in a wide variety of tissues, most abundantly in skeletal musclen.

It localises to the nucleus. Its subcellular location is the cytoplasm. In terms of biological role, transcription factor that plays a key role in several developmental processes, including neurogenesis, chondrocytes differentiation and cartilage formation. Specifically binds the 5'-AACAAT-3' DNA motif present in enhancers and super-enhancers and promotes expression of genes important for chondrogenesis. Required for overt chondrogenesis when condensed prechondrocytes differentiate into early stage chondrocytes: SOX5 and SOX6 cooperatively bind with SOX9 on active enhancers and super-enhancers associated with cartilage-specific genes, and thereby potentiate SOX9's ability to transactivate. Not involved in precartilaginous condensation, the first step in chondrogenesis, during which skeletal progenitors differentiate into prechondrocytes. Together with SOX5, required to form and maintain a pool of highly proliferating chondroblasts between epiphyses and metaphyses, to form columnar chondroblasts, delay chondrocyte prehypertrophy but promote hypertrophy, and to delay terminal differentiation of chondrocytes on contact with ossification fronts. Binds to the proximal promoter region of the myelin protein MPZ gene, and is thereby involved in the differentiation of oligodendroglia in the developing spinal tube. Binds to the gene promoter of MBP and acts as a transcriptional repressor. The polypeptide is Transcription factor SOX-6 (Homo sapiens (Human)).